The primary structure comprises 392 residues: Selenide, water dikinase 1 (392 aa).

The active site involves Cys31. ATP-binding positions include Lys32, 67–69 (GMD), Asp87, Asp110, and 161–164 (GGQT). Asp69 contributes to the Mg(2+) binding site. Asp110 lines the Mg(2+) pocket. Position 265 (Asp265) interacts with Mg(2+). The residue at position 387 (Thr387) is a Phosphothreonine.

The protein belongs to the selenophosphate synthase 1 family. Class II subfamily. As to quaternary structure, homodimer. Requires Mg(2+) as cofactor.

The protein localises to the cell membrane. It is found in the nucleus membrane. The enzyme catalyses hydrogenselenide + ATP + H2O = selenophosphate + AMP + phosphate + 2 H(+). In terms of biological role, synthesizes selenophosphate from selenide and ATP. The sequence is that of Selenide, water dikinase 1 (sephs1) from Danio rerio (Zebrafish).